Consider the following 955-residue polypeptide: Isoleucine--tRNA ligase (955 aa).

The short motif at 58 to 68 (IYANGDIHIGH) is the 'HIGH' region element. L-isoleucyl-5'-AMP is bound at residue E552. A 'KMSKS' region motif is present at residues 593–597 (KMSKS). K596 serves as a coordination point for ATP. C918, C921, C938, and C941 together coordinate Zn(2+).

It belongs to the class-I aminoacyl-tRNA synthetase family. IleS type 1 subfamily. As to quaternary structure, monomer. Requires Zn(2+) as cofactor.

Its subcellular location is the cytoplasm. It carries out the reaction tRNA(Ile) + L-isoleucine + ATP = L-isoleucyl-tRNA(Ile) + AMP + diphosphate. In terms of biological role, catalyzes the attachment of isoleucine to tRNA(Ile). As IleRS can inadvertently accommodate and process structurally similar amino acids such as valine, to avoid such errors it has two additional distinct tRNA(Ile)-dependent editing activities. One activity is designated as 'pretransfer' editing and involves the hydrolysis of activated Val-AMP. The other activity is designated 'posttransfer' editing and involves deacylation of mischarged Val-tRNA(Ile). This chain is Isoleucine--tRNA ligase, found in Vesicomyosocius okutanii subsp. Calyptogena okutanii (strain HA).